The following is a 232-amino-acid chain: Small ribosomal subunit protein uS3 (232 aa).

The 69-residue stretch at 39-107 (VRRFLEQRLK…PVHVNIEEVR (69 aa)) folds into the KH type-2 domain.

It belongs to the universal ribosomal protein uS3 family. As to quaternary structure, part of the 30S ribosomal subunit. Forms a tight complex with proteins S10 and S14.

Its function is as follows. Binds the lower part of the 30S subunit head. Binds mRNA in the 70S ribosome, positioning it for translation. In Chromohalobacter salexigens (strain ATCC BAA-138 / DSM 3043 / CIP 106854 / NCIMB 13768 / 1H11), this protein is Small ribosomal subunit protein uS3.